We begin with the raw amino-acid sequence, 445 residues long: Ribosome biogenesis protein YTM1 (445 aa).

The interval 8-89 (VKVKFFTREQ…EAVLNVEYTR (82 aa)) is ubiquitin-like (UBL) domain. The segment at 99–445 (SFSNEDWVSA…FNKGDNIFKN (347 aa)) is sufficient for interaction with ERB1 and association with 66S pre-ribosomes. WD repeat units follow at residues 101 to 138 (SNEDWVSALDVGAERIVSGSYDGVVRTWNLSGKIEKQY), 140 to 178 (GHTGAVRAVKFISSTRLVSGGNDRTLRLWKTKNDDVKHV), 195 to 232 (GHQAPVVSVDVQGDRILSASYDNSIGFWSTNHKDMTAV), 270 to 310 (SHKA…CVDT), 312 to 351 (STSYSLLSMVELPKLRLLACGSSARHITLHDPRADSSAKI), 358 to 398 (GHKN…SIYT), and 409 to 445 (GINDKVFAVKWAKGVGIISGGQDKKIQFNKGDNIFKN).

This sequence belongs to the WD repeat WDR12/YTM1 family. As to quaternary structure, component of the NOP7 complex, composed of ERB1, NOP7 and YTM1. The complex is held together by ERB1, which interacts with NOP7 via its N-terminal domain and with YTM1 via a high-affinity interaction between the seven-bladed beta-propeller domains of the 2 proteins. The NOP7 complex associates with the 66S pre-ribosome. Interacts (via UBL domain) with MDN1 (via VWFA/MIDAS domain).

Its subcellular location is the nucleus. It localises to the nucleolus. The protein localises to the nucleoplasm. Component of the NOP7 complex, which is required for maturation of the 25S and 5.8S ribosomal RNAs and formation of the 60S ribosome. The protein is Ribosome biogenesis protein YTM1 of Eremothecium gossypii (strain ATCC 10895 / CBS 109.51 / FGSC 9923 / NRRL Y-1056) (Yeast).